The sequence spans 763 residues: DNA-binding protein SATB1 (763 aa).

Residues 1-15 are compositionally biased toward basic and acidic residues; sequence MDHLNEATQGKEHSE. The segment at 1–54 is disordered; it reads MDHLNEATQGKEHSEMSNNVSDPKGPPAKIARLEQNGSPLGRGRLGSTGAKMQG. Residues 20 to 40 carry the Nuclear localization signal motif; sequence VSDPKGPPAKIARLEQNGSPL. A Glycyl lysine isopeptide (Lys-Gly) (interchain with G-Cter in SUMO2) cross-link involves residue Lys51. The CMP domain occupies 71–172; sequence GTMLPVFCVV…VVTLKIQLHS (102 aa). At Lys136 the chain carries N6-acetyllysine. Residues 139-143 carry the Protein interaction motif; the sequence is PVPLS. The region spanning 175–248 is the CUTL domain; that stretch reads KLEDLPPEQW…WYKHFKKTKD (74 aa). At Ser185 the chain carries Phosphoserine. Residues 224-278 form a nuclear matrix targeting sequence (NMTS) region; that stretch reads YYANVSAAKCQEFGRWYKHFKKTKDMMVEMDSLSELSQQGANHVNFGQQPVPGNT. Polar residues predominate over residues 266 to 296; it reads HVNFGQQPVPGNTAEQPPSPAQLSHGSQPSV. The segment at 266–307 is disordered; that stretch reads HVNFGQQPVPGNTAEQPPSPAQLSHGSQPSVRTPLPNLHPGL. 2 DNA-binding regions (CUT) span residues 361 to 448 and 484 to 571; these read LEQQ…QDER and NGKP…EQES. Residues Gln390, 400–410, and Asn425 contribute to the DNA site; that span reads RTQGLLSEILR. The segment covering 591–607 has biased composition (low complexity); sequence QIQQQQQQQQQQQQQQQ. Residues 591 to 649 form a disordered region; sequence QIQQQQQQQQQQQQQQQAPPPPQPQQQPQTGPRLPPRQPTVASPAESDEENRQKTRPRT. Residue Ser637 is modified to Phosphoserine. Positions 645–704 form a DNA-binding region, homeobox; the sequence is TRPRTKISVEALGILQSFIQDVGLYPDEEAIQTLSAQLDLPKYTIIKFFQNQRYYLKHHG. Residue Lys744 forms a Glycyl lysine isopeptide (Lys-Gly) (interchain with G-Cter in SUMO) linkage.

The protein belongs to the CUT homeobox family. Interacts with CUX1 (via DNA-binding domains); the interaction inhibits the attachment of both proteins to DNA. Homodimer. Part of the nuclear protein complex gamma-globin promoter and enhancer binding factor (gamma-PE) composed at least of SATB1 and HOXB2. Interaction with CtBP1 when not acetylated stabilizes attachment to DNA and promotes transcription repression. Interacts with PCAF. Interacts with sumoylated PML and HDAC1 via the CMP domain. Interacts also with DYNLT3 and POLR2J2. Binds to EP300. In terms of assembly, (Microbial infection) Interacts (via the CMP domain) with HIV-1 Tat. Sumoylated. Sumoylation promotes cleavage by caspases. Post-translationally, phosphorylated by PKC. Acetylated by PCAF. Phosphorylated form interacts with HDAC1, but unphosphorylated form interacts with PCAF. DNA binding properties are activated by phosphorylation and inactivated by acetylation. In opposition, gene expression is down-regulated by phosphorylation but up-regulated by acetylation. In terms of processing, cleaved at Asp-254 by caspase-3 and caspase-6 during T-cell apoptosis in thymus and during B-cell stimulation. The cleaved forms cannot dimerize and lose transcription regulation function because of impaired DNA and chromatin association. Expressed predominantly in thymus.

The protein localises to the nucleus matrix. Its subcellular location is the nucleus. The protein resides in the PML body. Crucial silencing factor contributing to the initiation of X inactivation mediated by Xist RNA that occurs during embryogenesis and in lymphoma. Binds to DNA at special AT-rich sequences, the consensus SATB1-binding sequence (CSBS), at nuclear matrix- or scaffold-associated regions. Thought to recognize the sugar-phosphate structure of double-stranded DNA. Transcriptional repressor controlling nuclear and viral gene expression in a phosphorylated and acetylated status-dependent manner, by binding to matrix attachment regions (MARs) of DNA and inducing a local chromatin-loop remodeling. Acts as a docking site for several chromatin remodeling enzymes (e.g. PML at the MHC-I locus) and also by recruiting corepressors (HDACs) or coactivators (HATs) directly to promoters and enhancers. Modulates genes that are essential in the maturation of the immune T-cell CD8SP from thymocytes. Required for the switching of fetal globin species, and beta- and gamma-globin genes regulation during erythroid differentiation. Plays a role in chromatin organization and nuclear architecture during apoptosis. Interacts with the unique region (UR) of cytomegalovirus (CMV). Alu-like motifs and SATB1-binding sites provide a unique chromatin context which seems preferentially targeted by the HIV-1 integration machinery. Moreover, HIV-1 Tat may overcome SATB1-mediated repression of IL2 and IL2RA (interleukin) in T-cells by binding to the same domain than HDAC1. Delineates specific epigenetic modifications at target gene loci, directly up-regulating metastasis-associated genes while down-regulating tumor-suppressor genes. Reprograms chromatin organization and the transcription profiles of breast tumors to promote growth and metastasis. Promotes neuronal differentiation of neural stem/progenitor cells in the adult subventricular zone, possibly by positively regulating the expression of NEUROD1. This Homo sapiens (Human) protein is DNA-binding protein SATB1.